The sequence spans 335 residues: MATIHRPRRGSLAFSPRKRAKSQVPRTRYWAAGEEKARMDGFAGYKAGMTHIIMIDDKPNSLTEGMEISVPVTILETPPLSIAALRVYEKYNGGVRAAGEAWSDKLDPSLARSITVPKNKRGAAIDEIGAIIEDMEELRLIAHTNPKLLTGVPKKNPDLMEIQVNGGNIANQFELAKSLLGSSVPISSIFSPGSIIDVSAITKGKGVQGPVKRWGINLQKRKHSRGGKRRHIGNLGPWNPHHVRWTVPLLGQMGYHQRTEFNKRVLAIGSDGGAITPDGGFPGYGIIRGEYAILSGSVPGPSKRLVRMRSAVRAKDADLKTPQVLYVSRDSKQGL.

The disordered stretch occupies residues 1–20 (MATIHRPRRGSLAFSPRKRA).

It belongs to the universal ribosomal protein uL3 family. As to quaternary structure, part of the 50S ribosomal subunit. Forms a cluster with proteins L14 and L24e.

In terms of biological role, one of the primary rRNA binding proteins, it binds directly near the 3'-end of the 23S rRNA, where it nucleates assembly of the 50S subunit. In Methanothrix harundinacea (strain 6Ac) (Methanosaeta harundinacea), this protein is Large ribosomal subunit protein uL3 (rpl3).